Reading from the N-terminus, the 354-residue chain is Ribosomal RNA large subunit methyltransferase M (354 aa).

Residues S183, 216 to 219, D235, D255, and D271 contribute to the S-adenosyl-L-methionine site; that span reads SPGG. The Proton acceptor role is filled by K300.

It belongs to the class I-like SAM-binding methyltransferase superfamily. RNA methyltransferase RlmE family. RlmM subfamily. Monomer.

The protein localises to the cytoplasm. It carries out the reaction cytidine(2498) in 23S rRNA + S-adenosyl-L-methionine = 2'-O-methylcytidine(2498) in 23S rRNA + S-adenosyl-L-homocysteine + H(+). Catalyzes the 2'-O-methylation at nucleotide C2498 in 23S rRNA. The sequence is that of Ribosomal RNA large subunit methyltransferase M from Pseudomonas putida (strain GB-1).